The primary structure comprises 149 residues: Endoribonuclease YbeY (149 aa).

Residues His106, His110, and His116 each coordinate Zn(2+).

It belongs to the endoribonuclease YbeY family. Requires Zn(2+) as cofactor.

The protein resides in the cytoplasm. In terms of biological role, single strand-specific metallo-endoribonuclease involved in late-stage 70S ribosome quality control and in maturation of the 3' terminus of the 16S rRNA. The sequence is that of Endoribonuclease YbeY from Methylobacillus flagellatus (strain ATCC 51484 / DSM 6875 / VKM B-1610 / KT).